Here is a 506-residue protein sequence, read N- to C-terminus: DEAD-box ATP-dependent RNA helicase CshA (506 aa).

The short motif at Gln2–Lys30 is the Q motif element. Residues Ile33 to Ile203 enclose the Helicase ATP-binding domain. ATP is bound at residue Ala46–Thr53. Residues Asp150–Asp153 carry the DEAD box motif. Positions Gln214 to Leu375 constitute a Helicase C-terminal domain. A disordered region spans residues Glu436–Lys506. Basic residues predominate over residues Lys468–Thr480.

This sequence belongs to the DEAD box helicase family. CshA subfamily. As to quaternary structure, oligomerizes, may be a member of the RNA degradosome.

It localises to the cytoplasm. The enzyme catalyses ATP + H2O = ADP + phosphate + H(+). In terms of biological role, DEAD-box RNA helicase possibly involved in RNA degradation. Unwinds dsRNA in both 5'- and 3'-directions, has RNA-dependent ATPase activity. This Staphylococcus aureus (strain MRSA252) protein is DEAD-box ATP-dependent RNA helicase CshA.